The chain runs to 186 residues: Elongation factor P (186 aa).

Belongs to the elongation factor P family.

The protein localises to the cytoplasm. It participates in protein biosynthesis; polypeptide chain elongation. Its function is as follows. Involved in peptide bond synthesis. Stimulates efficient translation and peptide-bond synthesis on native or reconstituted 70S ribosomes in vitro. Probably functions indirectly by altering the affinity of the ribosome for aminoacyl-tRNA, thus increasing their reactivity as acceptors for peptidyl transferase. The chain is Elongation factor P from Streptococcus thermophilus (strain CNRZ 1066).